Consider the following 106-residue polypeptide: Iron-sulfur cluster assembly protein CyaY (106 aa).

It belongs to the frataxin family.

In terms of biological role, involved in iron-sulfur (Fe-S) cluster assembly. May act as a regulator of Fe-S biogenesis. The polypeptide is Iron-sulfur cluster assembly protein CyaY (Dickeya chrysanthemi (Pectobacterium chrysanthemi)).